The sequence spans 218 residues: Enhancer of split M2 protein (218 aa).

Residues 1–25 (MYLDTKNLTASSTSALTAATASNSK) are compositionally biased toward low complexity. Disordered stretches follow at residues 1–30 (MYLD…TRRM), 64–86 (NTQQ…KSTP), and 137–164 (GRNC…SSSA). Low complexity predominate over residues 147 to 163 (SSNINSSSSSSNMNSSS).

Functionally, part of the Notch signaling pathway. The protein is Enhancer of split M2 protein of Drosophila melanogaster (Fruit fly).